The sequence spans 206 residues: Small ribosomal subunit protein uS4 (206 aa).

The region spanning 96-156 (SRLDNVVYRM…EKSKKQLRIQ (61 aa)) is the S4 RNA-binding domain.

It belongs to the universal ribosomal protein uS4 family. Part of the 30S ribosomal subunit. Contacts protein S5. The interaction surface between S4 and S5 is involved in control of translational fidelity.

In terms of biological role, one of the primary rRNA binding proteins, it binds directly to 16S rRNA where it nucleates assembly of the body of the 30S subunit. Its function is as follows. With S5 and S12 plays an important role in translational accuracy. This chain is Small ribosomal subunit protein uS4, found in Francisella philomiragia subsp. philomiragia (strain ATCC 25017 / CCUG 19701 / FSC 153 / O#319-036).